Consider the following 198-residue polypeptide: Probable chorismate pyruvate-lyase (198 aa).

Substrate is bound by residues R73, L111, and E172.

It belongs to the UbiC family.

The protein localises to the cytoplasm. The catalysed reaction is chorismate = 4-hydroxybenzoate + pyruvate. The protein operates within cofactor biosynthesis; ubiquinone biosynthesis. Its function is as follows. Removes the pyruvyl group from chorismate, with concomitant aromatization of the ring, to provide 4-hydroxybenzoate (4HB) for the ubiquinone pathway. The chain is Probable chorismate pyruvate-lyase from Burkholderia orbicola (strain AU 1054).